We begin with the raw amino-acid sequence, 253 residues long: MDYNNFGNSASKKFQDDTLNRVRKEHEEALKKLREENFSSNTSELGNKKHYRAQERMSSPLHRLSPAGKSDDRKVKSPLDDKLRRQLREGNTRLPPPPFSSYGMPPTNRSNLDRIRRRTSSPVRTDKFASQNVIDDQRLEIKYLERIVYDQGTVIDNLTSRITRLESFILNSISDRGDKNFASLEHSRSFSGFPTNKTYGLQMGGLYENDMPYRRSSDNINKEGAREDRSSQIHIENESTEDILKILSSSFHN.

Positions 1–12 (MDYNNFGNSASK) are enriched in polar residues. Disordered stretches follow at residues 1–20 (MDYNNFGNSASKKFQDDTLN), 31–123 (KKLR…SSPV), and 210–232 (DMPYRRSSDNINKEGAREDRSSQ). The residue at position 18 (Thr-18) is a Phosphothreonine. Ser-65 bears the Phosphoserine mark. Composition is skewed to basic and acidic residues over residues 69–91 (KSDDRKVKSPLDDKLRRQLREGN) and 211–232 (MPYRRSSDNINKEGAREDRSSQ). Residue Thr-240 is modified to Phosphothreonine; by MPS1.

Belongs to the SPC29 family. In terms of assembly, component of the SPC110 complex containing at least CMD1, SPC29, SPC42 and SCP110. Interacts with BBP1. Post-translationally, MPS1-mediated phosphorylation at Thr-240 is required for spindle pole body duplication.

The protein resides in the nucleus. It localises to the cytoplasm. It is found in the cytoskeleton. The protein localises to the microtubule organizing center. Its subcellular location is the spindle pole body. Its function is as follows. Component of the spindle pole body (SPB) required for the proper execution of spindle pole body (SPB) duplication. Links the central plaque component SPC42 to the inner plaque component SPC110. This Saccharomyces cerevisiae (strain YJM789) (Baker's yeast) protein is Spindle pole component 29 (SPC29).